Reading from the N-terminus, the 154-residue chain is Large ribosomal subunit protein bL17 (154 aa).

A disordered region spans residues 125–154 (AASQKSSKQDRAKRVQGSKKNVDAVAESAE).

Belongs to the bacterial ribosomal protein bL17 family. Part of the 50S ribosomal subunit. Contacts protein L32.

This chain is Large ribosomal subunit protein bL17, found in Chlorobium chlorochromatii (strain CaD3).